The sequence spans 81 residues: Photosystem I iron-sulfur center (81 aa).

4Fe-4S ferredoxin-type domains follow at residues 2 to 31 (SHSV…MIPW) and 39 to 68 (IASA…VRVY). Residues Cys11, Cys14, Cys17, Cys21, Cys48, Cys51, Cys54, and Cys58 each coordinate [4Fe-4S] cluster.

The eukaryotic PSI reaction center is composed of at least 11 subunits. [4Fe-4S] cluster serves as cofactor.

It is found in the plastid. The protein resides in the chloroplast thylakoid membrane. It catalyses the reaction reduced [plastocyanin] + hnu + oxidized [2Fe-2S]-[ferredoxin] = oxidized [plastocyanin] + reduced [2Fe-2S]-[ferredoxin]. Functionally, apoprotein for the two 4Fe-4S centers FA and FB of photosystem I (PSI); essential for photochemical activity. FB is the terminal electron acceptor of PSI, donating electrons to ferredoxin. The C-terminus interacts with PsaA/B/D and helps assemble the protein into the PSI complex. Required for binding of PsaD and PsaE to PSI. PSI is a plastocyanin-ferredoxin oxidoreductase, converting photonic excitation into a charge separation, which transfers an electron from the donor P700 chlorophyll pair to the spectroscopically characterized acceptors A0, A1, FX, FA and FB in turn. The sequence is that of Photosystem I iron-sulfur center from Acorus calamus (Sweet flag).